The sequence spans 627 residues: (-)-beta-pinene synthase 2, chloroplastic (627 aa).

The transit peptide at 1-51 (MDLISVLPSASKSCVCLHKPLSSSTHKLKPFCRKIRILGMPRPRKSVLMVS) directs the protein to the chloroplast. 3 residues coordinate Mg(2+): Asp378, Asp382, and Asp530. The DDXXD motif signature appears at 378–382 (DDMYD).

This sequence belongs to the terpene synthase family. Tpsd subfamily. Requires Mg(2+) as cofactor. The cofactor is Mn(2+).

Its subcellular location is the plastid. It localises to the chloroplast. It catalyses the reaction (2E)-geranyl diphosphate = (1S,5S)-beta-pinene + diphosphate. It carries out the reaction (2E)-geranyl diphosphate = (1S,5S)-alpha-pinene + diphosphate. It participates in terpene metabolism; oleoresin biosynthesis. Its pathway is secondary metabolite biosynthesis; terpenoid biosynthesis. Its function is as follows. Monoterpene synthase (TPS) involved in the biosynthesis of monoterpene natural products included in conifer oleoresin secretions and volatile emissions; these compounds contribute to biotic and abiotic stress defense against herbivores and pathogens. Catalyzes the conversion of (2E)-geranyl diphosphate (GPP) to (-)-beta-pinene and, to a lower extent, to (-)-alpha-pinene. The chain is (-)-beta-pinene synthase 2, chloroplastic from Pinus banksiana (Jack pine).